The following is a 453-amino-acid chain: UDP-N-acetylmuramoylalanine--D-glutamate ligase (453 aa).

120 to 126 contributes to the ATP binding site; it reads GSNGKST.

Belongs to the MurCDEF family.

It is found in the cytoplasm. It carries out the reaction UDP-N-acetyl-alpha-D-muramoyl-L-alanine + D-glutamate + ATP = UDP-N-acetyl-alpha-D-muramoyl-L-alanyl-D-glutamate + ADP + phosphate + H(+). It functions in the pathway cell wall biogenesis; peptidoglycan biosynthesis. Its function is as follows. Cell wall formation. Catalyzes the addition of glutamate to the nucleotide precursor UDP-N-acetylmuramoyl-L-alanine (UMA). This is UDP-N-acetylmuramoylalanine--D-glutamate ligase from Nitrosococcus oceani (strain ATCC 19707 / BCRC 17464 / JCM 30415 / NCIMB 11848 / C-107).